The following is a 449-amino-acid chain: Tubulin alpha-1 chain (449 aa).

GTP contacts are provided by Gln11, Glu71, Ser140, Gly144, Thr145, Thr179, Asn206, and Asn228. Glu71 serves as a coordination point for Mg(2+). Glu254 is an active-site residue.

The protein belongs to the tubulin family. In terms of assembly, dimer of alpha and beta chains. A typical microtubule is a hollow water-filled tube with an outer diameter of 25 nm and an inner diameter of 15 nM. Alpha-beta heterodimers associate head-to-tail to form protofilaments running lengthwise along the microtubule wall with the beta-tubulin subunit facing the microtubule plus end conferring a structural polarity. Microtubules usually have 13 protofilaments but different protofilament numbers can be found in some organisms and specialized cells. Requires Mg(2+) as cofactor.

It is found in the cytoplasm. The protein resides in the cytoskeleton. It carries out the reaction GTP + H2O = GDP + phosphate + H(+). Functionally, tubulin is the major constituent of microtubules, a cylinder consisting of laterally associated linear protofilaments composed of alpha- and beta-tubulin heterodimers. Microtubules grow by the addition of GTP-tubulin dimers to the microtubule end, where a stabilizing cap forms. Below the cap, tubulin dimers are in GDP-bound state, owing to GTPase activity of alpha-tubulin. This is Tubulin alpha-1 chain (tubA) from Emericella nidulans (strain FGSC A4 / ATCC 38163 / CBS 112.46 / NRRL 194 / M139) (Aspergillus nidulans).